The chain runs to 2873 residues: WD repeat-containing protein 87 (2873 aa).

WD repeat units follow at residues Pro-108–Gln-146, Thr-199–Ser-239, Ala-242–Glu-283, Ser-368–Lys-407, Asn-415–Lys-460, Leu-516–Ser-553, and Leu-565–Leu-604. 5 disordered regions span residues Phe-1049–Thr-1124, Asp-1177–Ala-1199, Glu-1392–Val-1413, Ser-1531–Arg-1607, and Lys-2199–Asp-2338. Composition is skewed to basic residues over residues Val-1089–Lys-1101 and Lys-1187–Lys-1197. Residues Glu-1549 to Trp-1574 are compositionally biased toward basic and acidic residues. Residues Ala-1575–Lys-1586 are compositionally biased toward basic residues. Composition is skewed to basic and acidic residues over residues Lys-1587–Arg-1607 and Lys-2204–Phe-2213. Residues Ser-2244–Glu-2276 are compositionally biased toward acidic residues. Positions Glu-2277–Lys-2287 are enriched in basic and acidic residues. Acidic residues predominate over residues Glu-2304–Val-2337.

This chain is WD repeat-containing protein 87 (WDR87), found in Homo sapiens (Human).